Here is a 92-residue protein sequence, read N- to C-terminus: Small ribosomal subunit protein uS19 (92 aa).

It belongs to the universal ribosomal protein uS19 family.

Its function is as follows. Protein S19 forms a complex with S13 that binds strongly to the 16S ribosomal RNA. The polypeptide is Small ribosomal subunit protein uS19 (Azorhizobium caulinodans (strain ATCC 43989 / DSM 5975 / JCM 20966 / LMG 6465 / NBRC 14845 / NCIMB 13405 / ORS 571)).